An 866-amino-acid polypeptide reads, in one-letter code: Phospholipase D gamma 3 (866 aa).

The C2 domain maps to 31–170 (PFDTSSGSLR…CSGNRIEGLF (140 aa)). Aspartate 232 serves as a coordination point for Ca(2+). A PLD phosphodiesterase 1 domain is found at 371-406 (TIYTHHQKTMIVDAEAAQNRRKIVAFVGGLDLCNGR). Active-site residues include histidine 376, lysine 378, and aspartate 383. Residue histidine 376 coordinates a 1,2-diacyl-sn-glycero-3-phosphate. Ca(2+) contacts are provided by histidine 412 and histidine 444. Position 572 (glutamine 572) interacts with a 1,2-diacyl-sn-glycero-3-phosphate. The residue at position 692 (serine 692) is a Phosphoserine. In terms of domain architecture, PLD phosphodiesterase 2 spans 712–739 (FMIYVHSKGMVVDDEFVLIGSANINQRS). Catalysis depends on residues histidine 717, lysine 719, and aspartate 724. Residue histidine 717 coordinates a 1,2-diacyl-sn-glycero-3-phosphate. Glutamate 780 serves as a coordination point for Ca(2+).

Belongs to the phospholipase D family. C2-PLD subfamily. Ca(2+) serves as cofactor. In terms of tissue distribution, highly expressed in inflorescences and old leaves, moderately in stems, roots, siliques and young leaves and low in flowers.

The protein resides in the cytoplasm. Its subcellular location is the membrane. It carries out the reaction a 1,2-diacyl-sn-glycero-3-phosphocholine + H2O = a 1,2-diacyl-sn-glycero-3-phosphate + choline + H(+). Its activity is regulated as follows. Inhibited by neomycin. Functionally, hydrolyzes glycerol-phospholipids at the terminal phosphodiesteric bond to generate phosphatidic acids (PA). Plays an important role in various cellular processes, including phytohormone action, vesicular trafficking, secretion, cytoskeletal arrangement, meiosis, tumor promotion, pathogenesis, membrane deterioration and senescence. Can use phosphatidylserine but prefers ethanolamine-containing lipids as substrates. The polypeptide is Phospholipase D gamma 3 (Arabidopsis thaliana (Mouse-ear cress)).